We begin with the raw amino-acid sequence, 438 residues long: V-type ATP synthase beta chain (438 aa).

It belongs to the ATPase alpha/beta chains family.

Produces ATP from ADP in the presence of a proton gradient across the membrane. The V-type beta chain is a regulatory subunit. The chain is V-type ATP synthase beta chain from Protochlamydia amoebophila (strain UWE25).